The chain runs to 794 residues: Protein SPA1-RELATED 4 (794 aa).

The 268-residue stretch at 1–268 (MKGSSESSSR…MSELLQSEFI (268 aa)) folds into the Protein kinase domain. The tract at residues 126 to 165 (SCSDSGSDEDATTKSREIGSSRQEEILSERRSKQQEEVKK) is disordered. Positions 136–165 (ATTKSREIGSSRQEEILSERRSKQQEEVKK) are enriched in basic and acidic residues. Residues 272-326 (RENLEEREAAMELRDRIEEQELLLEFLFLIQQRKQEAADKLQDTISLLSSDIDQV) are a coiled coil. Disordered stretches follow at residues 352 to 373 (QGAE…EESK) and 428 to 447 (GRSS…INDS). A compositionally biased stretch (acidic residues) spans 358–369 (AAEEENDDNSID). WD repeat units lie at residues 482–521 (NSSN…KDGR), 531–571 (ASRS…LVTE), 574–614 (EHEK…SIGT), 616–656 (KTKA…LPLC), 660–698 (GHHK…SGIN), 707–746 (GHTN…PVLS), and 762–794 (DASQ…LEMV). The short motif at 635–649 (AFGSADHKVYYYDLR) is the DWD box element.

As to quaternary structure, interacts with COP1 and CO. Binds to CRY1 in response to blue light, this interaction prevents SPA1/COP1 complex formation and thus avoid COP1-dependent degradation of the transcription factor HY5 by the proteasome and promotes hypocotyl elongation.

Its subcellular location is the nucleus. Functionally, repressor of photomorphogenesis in the light. Probably part of the COP1/SPA E3 ubiquitin-protein ligase complex. In Arabidopsis thaliana (Mouse-ear cress), this protein is Protein SPA1-RELATED 4 (SPA4).